The primary structure comprises 326 residues: L-lactate dehydrogenase (326 aa).

NAD(+)-binding positions include Val26, Asp47, Lys52, Tyr78, and 92-93 (GA). Gln95 and Arg101 together coordinate substrate. NAD(+) contacts are provided by residues Thr114, 131–133 (ASN), and Ser156. 133-136 (NPVD) contacts substrate. Position 161-164 (161-164 (DTAR)) interacts with substrate. Beta-D-fructose 1,6-bisphosphate is bound by residues Arg166 and His181. His188 (proton acceptor) is an active-site residue. Tyr233 carries the phosphotyrosine modification. Thr242 contacts substrate.

It belongs to the LDH/MDH superfamily. LDH family. Homotetramer.

Its subcellular location is the cytoplasm. It catalyses the reaction (S)-lactate + NAD(+) = pyruvate + NADH + H(+). The protein operates within fermentation; pyruvate fermentation to lactate; (S)-lactate from pyruvate: step 1/1. Allosterically activated by fructose 1,6-bisphosphate (FBP). In terms of biological role, catalyzes the conversion of lactate to pyruvate. The polypeptide is L-lactate dehydrogenase (Corynebacterium jeikeium (strain K411)).